We begin with the raw amino-acid sequence, 1735 residues long: Inactive tyrosine-protein kinase PEAK1 (1735 aa).

Disordered stretches follow at residues 26-66 (LHQL…PPVA) and 111-145 (LSQK…KISN). Polar residues-rich tracts occupy residues 111-121 (LSQKPLNNNSE) and 130-145 (DPQQ…KISN). The residue at position 282 (S282) is a Phosphoserine. 3 disordered regions span residues 324–410 (NSGV…SVKV), 491–514 (GRPK…LTPG), and 537–580 (SPRQ…SKTI). Low complexity predominate over residues 325–336 (SGVSYGQGSVQS). Polar residues predominate over residues 337-365 (TISSDCTSPGSSFTEESRSETASSLSQKV). Low complexity predominate over residues 367–378 (NGGISPGNPGNS). Residues 384–393 (TESNFESPPG) are compositionally biased toward polar residues. The segment covering 498 to 509 (SSSTPNSPVTSP) has biased composition (low complexity). S537, S569, and S584 each carry phosphoserine. Residues 566 to 580 (APTSPTATNISSKTI) show a composition bias toward polar residues. A phosphotyrosine mark is found at Y632 and Y638. Position 645 is a phosphoserine (S645). Y662 carries the phosphotyrosine modification. Disordered stretches follow at residues 663–762 (EEIE…REKA), 800–919 (PDAD…AADA), and 1019–1097 (RNSE…SATY). 3 stretches are compositionally biased toward polar residues: residues 704–735 (QEFN…QRPT), 745–757 (AQGS…SSNS), and 819–839 (LFTS…SPTA). S824 and S825 each carry phosphoserine. Low complexity predominate over residues 847-863 (TKPVTSPPSKLVTSAQS). Pro residues predominate over residues 864-873 (EPPPPFPPPR). Over residues 879–901 (YHASNLLQRHFTNWTKPTSPTRS) the composition is skewed to polar residues. S897 is modified (phosphoserine). Composition is skewed to basic and acidic residues over residues 902–919 (TEAE…AADA) and 1037–1055 (ACSR…RDPR). Positions 1076–1086 (EREEEKDDTLD) are enriched in acidic residues. T1141 bears the Phosphothreonine mark. Phosphotyrosine is present on Y1177. The tract at residues 1274-1300 (EVVGKLRSLHTDALKRLAVKCEDLFMA) is required for homodimerization. The Protein kinase domain occupies 1302-1664 (QKDQLRFGVD…LLWGPREDLF (363 aa)). The residue at position 1363 (S1363) is a Phosphoserine. The tract at residues 1394 to 1445 (WEDPDAPEKAEDGTEDSEEEGKAETLGGNPEPCSETEPSQKENQRVTNRKQR) is disordered. Residues 1659 to 1732 (PREDLFQIFT…DSLSYIVKIL (74 aa)) form a required for homodimerization region.

This sequence belongs to the protein kinase superfamily. In terms of assembly, homodimer. Interacts with BCAR1 and CRK. Interacts with PRAG1. Interacts (when phosphorylated at Tyr-1177) with SHC1 (via PID domain). Found in a complex with PPP1CA, PPP1CC and SHC1. Interacts (when phosphorylated at Tyr-632) with tensin TNS3 (when phosphorylated on the SH2 domain); TNS3 also interacts with integrins ITGB1, ITGB3 and ITGB5 and mediates their association with PEAK1. Post-translationally, phosphorylated on tyrosine in a CSK-dependent manner in response to adhesion to fibronectin and to EGF stimulation. Phosphorylation at Tyr-662 by a Src family kinase controls subcellular localization to focal adhesion and focal adhesion dynamics. Phosphorylation at Tyr-1177 is essential for binding to SHC1. Phosphorylation at Tyr-632 promotes interaction with tensin TNS3.

It localises to the cytoplasm. It is found in the cytoskeleton. The protein resides in the cell junction. Its subcellular location is the focal adhesion. Probable catalytically inactive kinase. Scaffolding protein that regulates the cytoskeleton to control cell spreading and migration by modulating focal adhesion dynamics. Acts as a scaffold for mediating EGFR signaling. This chain is Inactive tyrosine-protein kinase PEAK1 (Peak1), found in Mus musculus (Mouse).